The following is a 545-amino-acid chain: Chaperonin GroEL (545 aa).

ATP-binding positions include 30–33 (TLGP), K51, 87–91 (DGTTT), G415, 479–481 (NAA), and D495.

This sequence belongs to the chaperonin (HSP60) family. As to quaternary structure, forms a cylinder of 14 subunits composed of two heptameric rings stacked back-to-back. Interacts with the co-chaperonin GroES.

It localises to the cytoplasm. It catalyses the reaction ATP + H2O + a folded polypeptide = ADP + phosphate + an unfolded polypeptide.. Functionally, together with its co-chaperonin GroES, plays an essential role in assisting protein folding. The GroEL-GroES system forms a nano-cage that allows encapsulation of the non-native substrate proteins and provides a physical environment optimized to promote and accelerate protein folding. This is Chaperonin GroEL from Tolumonas auensis (strain DSM 9187 / NBRC 110442 / TA 4).